The chain runs to 281 residues: MGIRKYKGTTNGRRNMNGYDFAEITKTTPEKSLLAPLKHTAGRNNAGKMTVRHRGGGTKRQYRIIDFKRIKDDVPATVKAIEYDPNRTANIALLGYADGTKSYILAPKGLKVGMTVQSGPDADIKVGNTLPLKNIPVGTVIHNIELKPGKGGQLTRSAGTSAQLLGKEEKYVLVRLSSGEVRMILAACRATIGSIGNDEHGLLVKGKAGRSRYAGQRPHVRGSVMNPNDHPHGGGEGKAPVGLPSPLSPWGKKTVGKKTRSHKARSNKFIVRGRKRGPHTR.

Residues 208-281 (AGRSRYAGQR…RGRKRGPHTR (74 aa)) are disordered. The segment covering 254–281 (TVGKKTRSHKARSNKFIVRGRKRGPHTR) has biased composition (basic residues).

The protein belongs to the universal ribosomal protein uL2 family. Part of the 50S ribosomal subunit. Forms a bridge to the 30S subunit in the 70S ribosome.

Functionally, one of the primary rRNA binding proteins. Required for association of the 30S and 50S subunits to form the 70S ribosome, for tRNA binding and peptide bond formation. It has been suggested to have peptidyltransferase activity; this is somewhat controversial. Makes several contacts with the 16S rRNA in the 70S ribosome. The protein is Large ribosomal subunit protein uL2 of Limosilactobacillus fermentum (strain NBRC 3956 / LMG 18251) (Lactobacillus fermentum).